We begin with the raw amino-acid sequence, 516 residues long: Protein DML1 (516 aa).

Belongs to the misato family.

It is found in the mitochondrion. Its function is as follows. Involved in the partitioning of the mitochondrial organelle and mitochondrial DNA (mtDNA) inheritance. The polypeptide is Protein DML1 (DML1) (Coccidioides immitis (strain RS) (Valley fever fungus)).